Reading from the N-terminus, the 351-residue chain is Snurportin-1 (351 aa).

Disordered stretches follow at residues 1 to 66 (MESS…QKGI) and 294 to 322 (EQKKKVNEQKEDPHTMEAEEDVESDEYDS). Positions 8–42 (LYKKGLDIGEQQKQRQKELLKQQKLRRQQEQDDYR) are enriched in basic and acidic residues. The span at 52 to 62 (PRKKSGKRSGH) shows a compositional bias: basic residues. A coiled-coil region spans residues 274 to 330 (VLQYMDAFEQKLAEHRRTLKEQKKKVNEQKEDPHTMEAEEDVESDEYDSLKRVLDQQ). A compositionally biased stretch (basic and acidic residues) spans 294 to 310 (EQKKKVNEQKEDPHTME). The span at 311 to 320 (AEEDVESDEY) shows a compositional bias: acidic residues.

This sequence belongs to the snurportin family. In terms of assembly, interacts with components of the snRNP complex including SmB and Smn; these interactions are RNA-dependent. Interacts with importin-7 msk but not with importin subunit beta Fs(2)Ket; the interaction is RNA-dependent.

It localises to the nucleus. Its subcellular location is the cytoplasm. The protein resides in the U-body. It is found in the nucleus speckle. The protein localises to the cajal body. Its function is as follows. Functions as an U snRNP-specific nuclear import adapter. Involved in the trimethylguanosine (m3G)-cap-dependent nuclear import of U snRNPs. Binds specifically to the terminal m3G-cap U snRNAs. This Drosophila melanogaster (Fruit fly) protein is Snurportin-1.